The sequence spans 258 residues: Spindlin-3 (258 aa).

Positions methionine 1–valine 23 are disordered. Tudor-like domain stretches follow at residues valine 50–histidine 99, valine 129–leucine 178, and valine 210–valine 255. 2 histone H3K4me3 and H3R8me2a binding regions span residues glutamate 138 and aspartate 246 to histidine 248.

Belongs to the SPIN/STSY family. As to quaternary structure, interacts with C11orf84/SPINDOC.

In terms of biological role, exhibits H3K4me3-binding activity. This is Spindlin-3 (SPIN3) from Homo sapiens (Human).